Reading from the N-terminus, the 105-residue chain is MSEFEVQVVNKRWNPLAEREELDLVLVHVAKPTPSRCEVEEKVAQMLGVDKKLVVVTKLLSEYGIGRTRARAHVYKNYERLQKLEPEKVKKLHEQCSQAQEAQAQ.

It belongs to the eukaryotic ribosomal protein eS24 family.

This Ignicoccus hospitalis (strain KIN4/I / DSM 18386 / JCM 14125) protein is Small ribosomal subunit protein eS24.